The primary structure comprises 61 residues: Small ribosomal subunit protein uS14 (61 aa).

Residues Cys24, Cys27, Cys40, and Cys43 each contribute to the Zn(2+) site.

Belongs to the universal ribosomal protein uS14 family. Zinc-binding uS14 subfamily. Part of the 30S ribosomal subunit. Contacts proteins S3 and S10. Zn(2+) is required as a cofactor.

In terms of biological role, binds 16S rRNA, required for the assembly of 30S particles and may also be responsible for determining the conformation of the 16S rRNA at the A site. This Desulfovibrio desulfuricans (strain ATCC 27774 / DSM 6949 / MB) protein is Small ribosomal subunit protein uS14.